A 229-amino-acid chain; its full sequence is Cytidylate kinase (229 aa).

10 to 18 (GHSSSGKST) is a binding site for ATP.

Belongs to the cytidylate kinase family. Type 1 subfamily.

It localises to the cytoplasm. The enzyme catalyses CMP + ATP = CDP + ADP. It carries out the reaction dCMP + ATP = dCDP + ADP. In Parabacteroides distasonis (strain ATCC 8503 / DSM 20701 / CIP 104284 / JCM 5825 / NCTC 11152), this protein is Cytidylate kinase.